Consider the following 168-residue polypeptide: MASVKSFKRKYLKLRKSFDSVVLETEEIEQKIAEISEVYRRILLENAHLNDLLIDMNSTVLPTPPASPPGSPYWEAKPVSHTVFLESPSDVFTLEKPIASTHRWLSKLTALSKSTNSTLSTPKSFHSPLQSRGISPSSAQSSAAVSSSRKQKRKRTSEGPSERRARKK.

Over residues 115–129 (TNSTLSTPKSFHSPL) the composition is skewed to polar residues. The tract at residues 115–168 (TNSTLSTPKSFHSPLQSRGISPSSAQSSAAVSSSRKQKRKRTSEGPSERRARKK) is disordered. Positions 130-148 (QSRGISPSSAQSSAAVSSS) are enriched in low complexity. Residues 156–168 (TSEGPSERRARKK) show a composition bias toward basic and acidic residues.

In terms of assembly, component of the INO80 chromatin remodeling complex.

The protein localises to the nucleus. Component of the INO80 complex which remodels chromatin by shifting nucleosomes and is involved in DNA repair. This is INO80 complex subunit 3 (iec3) from Schizosaccharomyces pombe (strain 972 / ATCC 24843) (Fission yeast).